Reading from the N-terminus, the 188-residue chain is Threonylcarbamoyl-AMP synthase (188 aa).

The 186-residue stretch at 3-188 folds into the YrdC-like domain; that stretch reads QLHPSEIKDL…RSGKILRNGQ (186 aa).

Belongs to the SUA5 family. TsaC subfamily.

Its subcellular location is the cytoplasm. The enzyme catalyses L-threonine + hydrogencarbonate + ATP = L-threonylcarbamoyladenylate + diphosphate + H2O. Functionally, required for the formation of a threonylcarbamoyl group on adenosine at position 37 (t(6)A37) in tRNAs that read codons beginning with adenine. Catalyzes the conversion of L-threonine, HCO(3)(-)/CO(2) and ATP to give threonylcarbamoyl-AMP (TC-AMP) as the acyladenylate intermediate, with the release of diphosphate. This Shewanella sp. (strain ANA-3) protein is Threonylcarbamoyl-AMP synthase.